The primary structure comprises 502 residues: Cytochrome P450 71B10 (502 aa).

Residues 1–21 form a helical membrane-spanning segment; that stretch reads MTVLWFVSLILLISILLVAVK. A heme-binding site is contributed by C443.

The protein belongs to the cytochrome P450 family. Heme serves as cofactor.

Its subcellular location is the membrane. This chain is Cytochrome P450 71B10 (CYP71B10), found in Arabidopsis thaliana (Mouse-ear cress).